We begin with the raw amino-acid sequence, 326 residues long: Beta-ketoacyl-[acyl-carrier-protein] synthase III (326 aa).

Active-site residues include C120 and H253. Residues 254–258 (QANIR) form an ACP-binding region. The active site involves N283.

The protein belongs to the thiolase-like superfamily. FabH family. In terms of assembly, homodimer.

It localises to the cytoplasm. It catalyses the reaction malonyl-[ACP] + acetyl-CoA + H(+) = 3-oxobutanoyl-[ACP] + CO2 + CoA. It functions in the pathway lipid metabolism; fatty acid biosynthesis. Catalyzes the condensation reaction of fatty acid synthesis by the addition to an acyl acceptor of two carbons from malonyl-ACP. Catalyzes the first condensation reaction which initiates fatty acid synthesis and may therefore play a role in governing the total rate of fatty acid production. Possesses both acetoacetyl-ACP synthase and acetyl transacylase activities. Its substrate specificity determines the biosynthesis of branched-chain and/or straight-chain of fatty acids. This is Beta-ketoacyl-[acyl-carrier-protein] synthase III from Cupriavidus necator (strain ATCC 17699 / DSM 428 / KCTC 22496 / NCIMB 10442 / H16 / Stanier 337) (Ralstonia eutropha).